A 377-amino-acid polypeptide reads, in one-letter code: F-box protein At1g11810 (377 aa).

The region spanning 2–48 (TTTMSTLPVVLVDEILARVPITSLRSLRSTCKKWEASSKTNLVGGKA) is the F-box domain.

In Arabidopsis thaliana (Mouse-ear cress), this protein is F-box protein At1g11810.